The primary structure comprises 179 residues: Large ribosomal subunit protein uL6 (179 aa).

Belongs to the universal ribosomal protein uL6 family. As to quaternary structure, part of the 50S ribosomal subunit.

This protein binds to the 23S rRNA, and is important in its secondary structure. It is located near the subunit interface in the base of the L7/L12 stalk, and near the tRNA binding site of the peptidyltransferase center. The chain is Large ribosomal subunit protein uL6 from Nocardia farcinica (strain IFM 10152).